A 349-amino-acid chain; its full sequence is UDP-3-O-acylglucosamine N-acyltransferase (349 aa).

His-246 acts as the Proton acceptor in catalysis.

Belongs to the transferase hexapeptide repeat family. LpxD subfamily. Homotrimer.

It carries out the reaction a UDP-3-O-[(3R)-3-hydroxyacyl]-alpha-D-glucosamine + a (3R)-hydroxyacyl-[ACP] = a UDP-2-N,3-O-bis[(3R)-3-hydroxyacyl]-alpha-D-glucosamine + holo-[ACP] + H(+). It functions in the pathway bacterial outer membrane biogenesis; LPS lipid A biosynthesis. Functionally, catalyzes the N-acylation of UDP-3-O-acylglucosamine using 3-hydroxyacyl-ACP as the acyl donor. Is involved in the biosynthesis of lipid A, a phosphorylated glycolipid that anchors the lipopolysaccharide to the outer membrane of the cell. In Protochlamydia amoebophila (strain UWE25), this protein is UDP-3-O-acylglucosamine N-acyltransferase.